Reading from the N-terminus, the 955-residue chain is RNA polymerase-associated protein RapA (955 aa).

The region spanning 163–333 (EVGHRYAPRV…FARLRLLDPE (171 aa)) is the Helicase ATP-binding domain. Residue 176-183 (DEVGLGKT) coordinates ATP. The DEAH box signature appears at 279 to 282 (DEAH). A Helicase C-terminal domain is found at 478-642 (RVDWLLELLL…AVRDELFELL (165 aa)).

The protein belongs to the SNF2/RAD54 helicase family. RapA subfamily. Interacts with the RNAP. Has a higher affinity for the core RNAP than for the holoenzyme. Its ATPase activity is stimulated by binding to RNAP.

Functionally, transcription regulator that activates transcription by stimulating RNA polymerase (RNAP) recycling in case of stress conditions such as supercoiled DNA or high salt concentrations. Probably acts by releasing the RNAP, when it is trapped or immobilized on tightly supercoiled DNA. Does not activate transcription on linear DNA. Probably not involved in DNA repair. The chain is RNA polymerase-associated protein RapA from Aeromonas salmonicida (strain A449).